The following is a 173-amino-acid chain: Large ribosomal subunit protein uL5 (173 aa).

The protein belongs to the universal ribosomal protein uL5 family. As to quaternary structure, part of the 50S ribosomal subunit; contacts the 5S rRNA and probably tRNA. Forms a bridge to the 30S subunit in the 70S ribosome.

In terms of biological role, this is one of the proteins that bind and probably mediate the attachment of the 5S RNA into the large ribosomal subunit, where it forms part of the central protuberance. In the 70S ribosome it contacts protein S13 of the 30S subunit (bridge B1b), connecting the 2 subunits; this bridge is implicated in subunit movement. May contact the P site tRNA; the 5S rRNA and some of its associated proteins might help stabilize positioning of ribosome-bound tRNAs. This Nitrosopumilus maritimus (strain SCM1) protein is Large ribosomal subunit protein uL5.